The sequence spans 218 residues: Large ribosomal subunit protein bL25 (218 aa).

The interval 197–218 (PAEESGEKPVAHIEEKESTEKE) is disordered. The span at 201–218 (SGEKPVAHIEEKESTEKE) shows a compositional bias: basic and acidic residues.

The protein belongs to the bacterial ribosomal protein bL25 family. CTC subfamily. In terms of assembly, part of the 50S ribosomal subunit; part of the 5S rRNA/L5/L18/L25 subcomplex. Contacts the 5S rRNA. Binds to the 5S rRNA independently of L5 and L18.

In terms of biological role, this is one of the proteins that binds to the 5S RNA in the ribosome where it forms part of the central protuberance. The polypeptide is Large ribosomal subunit protein bL25 (Dehalococcoides mccartyi (strain ATCC BAA-2100 / JCM 16839 / KCTC 5957 / BAV1)).